A 342-amino-acid polypeptide reads, in one-letter code: Cytosolic Fe-S cluster assembly factor NBP35 (342 aa).

Residues C33, C47, C50, and C56 each contribute to the [4Fe-4S] cluster site. 86–93 (GKGGVGKS) is an ATP binding site. [4Fe-4S] cluster-binding residues include C259 and C262.

The protein belongs to the Mrp/NBP35 ATP-binding proteins family. NUBP1/NBP35 subfamily. As to quaternary structure, heterotetramer of 2 NBP35 and 2 CFD1 chains. The cofactor is [4Fe-4S] cluster.

The protein resides in the cytoplasm. Its function is as follows. Component of the cytosolic iron-sulfur (Fe/S) protein assembly (CIA) machinery. Required for maturation of extramitochondrial Fe-S proteins. The NBP35-CFD1 heterotetramer forms a Fe-S scaffold complex, mediating the de novo assembly of an Fe-S cluster and its transfer to target apoproteins. This Gibberella zeae (strain ATCC MYA-4620 / CBS 123657 / FGSC 9075 / NRRL 31084 / PH-1) (Wheat head blight fungus) protein is Cytosolic Fe-S cluster assembly factor NBP35.